The primary structure comprises 311 residues: Porphobilinogen deaminase (311 aa).

Cys-242 is subject to S-(dipyrrolylmethanemethyl)cysteine.

This sequence belongs to the HMBS family. As to quaternary structure, monomer. Dipyrromethane is required as a cofactor.

It catalyses the reaction 4 porphobilinogen + H2O = hydroxymethylbilane + 4 NH4(+). Its pathway is porphyrin-containing compound metabolism; protoporphyrin-IX biosynthesis; coproporphyrinogen-III from 5-aminolevulinate: step 2/4. In terms of biological role, tetrapolymerization of the monopyrrole PBG into the hydroxymethylbilane pre-uroporphyrinogen in several discrete steps. In Hahella chejuensis (strain KCTC 2396), this protein is Porphobilinogen deaminase.